We begin with the raw amino-acid sequence, 197 residues long: Dephospho-CoA kinase (197 aa).

Positions 2–197 (IIGLTGGIGS…HTKYMELLNE (196 aa)) constitute a DPCK domain. Residue 10–15 (GSGKSA) coordinates ATP.

The protein belongs to the CoaE family.

It is found in the cytoplasm. The catalysed reaction is 3'-dephospho-CoA + ATP = ADP + CoA + H(+). Its pathway is cofactor biosynthesis; coenzyme A biosynthesis; CoA from (R)-pantothenate: step 5/5. Its function is as follows. Catalyzes the phosphorylation of the 3'-hydroxyl group of dephosphocoenzyme A to form coenzyme A. This chain is Dephospho-CoA kinase, found in Gamma-proteobacterium EBAC31A08.